Consider the following 397-residue polypeptide: CCA-adding enzyme (397 aa).

Positions 27 and 30 each coordinate ATP. Gly-27 and Arg-30 together coordinate CTP. Mg(2+)-binding residues include Asp-40 and Asp-42. The ATP site is built by Arg-111, Asp-154, Arg-157, Arg-160, and Arg-163. CTP-binding residues include Arg-111, Asp-154, Arg-157, Arg-160, and Arg-163.

It belongs to the tRNA nucleotidyltransferase/poly(A) polymerase family. Bacterial CCA-adding enzyme type 3 subfamily. In terms of assembly, homodimer. Mg(2+) serves as cofactor.

It carries out the reaction a tRNA precursor + 2 CTP + ATP = a tRNA with a 3' CCA end + 3 diphosphate. The catalysed reaction is a tRNA with a 3' CCA end + 2 CTP + ATP = a tRNA with a 3' CCACCA end + 3 diphosphate. Functionally, catalyzes the addition and repair of the essential 3'-terminal CCA sequence in tRNAs without using a nucleic acid template. Adds these three nucleotides in the order of C, C, and A to the tRNA nucleotide-73, using CTP and ATP as substrates and producing inorganic pyrophosphate. Has no poly(A) polymerase activity. In Bacillus subtilis (strain 168), this protein is CCA-adding enzyme.